Here is a 360-residue protein sequence, read N- to C-terminus: F420-dependent hydroxymycolic acid dehydrogenase (360 aa).

Positions 1-40 (MTGISRRTFGLAAGFGAIGAGGLGGGCSTRSGPTPTPEPA) form a signal peptide, tat-type signal. Coenzyme F420-(gamma-Glu)n is bound at residue Asp77. His78 functions as the Proton donor in the catalytic mechanism. 145 to 146 (TG) lines the coenzyme F420-(gamma-Glu)n pocket. Catalysis depends on Glu147, which acts as the Proton acceptor. Coenzyme F420-(gamma-Glu)n contacts are provided by residues Asn150 and 213-214 (SG).

The protein belongs to the F420-dependent hydroxymycolic acid dehydrogenase family. Homodimer. In terms of processing, is exported by the Tat system. The position of the signal peptide cleavage has not been experimentally proven. May be lipidated.

The protein localises to the cell envelope. It participates in lipid metabolism; mycolic acid biosynthesis. With respect to regulation, is inhibited by the anti-tuberculous drug PA-824, a bicyclic 4-nitroimidazole class compound. Therefore, this is consistent with the finding that PA-824 inhibits the formation of K-MAs and causes an accumulation of hydroxymycolic acids (H-MAs) in M.tuberculosis. Its function is as follows. Catalyzes the coenzyme F420-dependent oxidation of hydroxymycolic acids (H-MAs) to ketomycolic acids (K-MAs), a lipid class making up the mycobacterial pseudo-outer membrane and over one-third of the dry weight of M.tuberculosis. Does not exhibit F420-dependent glucose-6-phosphate dehydrogenase (FGD) activity. This Mycobacterium tuberculosis (strain ATCC 25618 / H37Rv) protein is F420-dependent hydroxymycolic acid dehydrogenase.